The chain runs to 1062 residues: Roc-COR-CHAT protease (1062 aa).

LRR repeat units lie at residues 70–94, 95–116, 115–141, 142–159, 160–180, 181–203, 204–226, and 228–249; these read LAGLQGLYLAENDFSSLQLPGHLQQ, LRLLHLADNKELKTLEFAGSMP, MPLLEEIDLSDSGIQTLQLPACPALQK, LDVSRSKLEAFSFASACP, ALWWLDLSGNGELRKLKMPAG, FKALQYLYLYKSGIQELQINGKL, PKLVVLDLEGNQLKQWPEKLLLP, and GLETLYLEGNPIENIPETIRGS. A COR domain is found at 470 to 660; it reads DWLGVMEELQ…GLMWKDNVVF (191 aa). The tract at residues 836–856 is disordered; that stretch reads ERDNDHTGLSDSSDQEDETFT. Residues His-931 and Cys-980 contribute to the active site.

A dedicated protease for substrate gasdermin bGSDM; cleaves the bGSDM precursor, releasing the pore-forming moiety, which integrates into the membrane and triggers cell death. Probably involved in defense against bacteriophages. Expression of bGSDM and this neighboring protease is highly toxic in E.coli. The sequence is that of Roc-COR-CHAT protease from Unknown prokaryotic organism.